A 260-amino-acid polypeptide reads, in one-letter code: Phosphoribosylaminoimidazole-succinocarboxamide synthase (260 aa).

The protein belongs to the SAICAR synthetase family.

The catalysed reaction is 5-amino-1-(5-phospho-D-ribosyl)imidazole-4-carboxylate + L-aspartate + ATP = (2S)-2-[5-amino-1-(5-phospho-beta-D-ribosyl)imidazole-4-carboxamido]succinate + ADP + phosphate + 2 H(+). It participates in purine metabolism; IMP biosynthesis via de novo pathway; 5-amino-1-(5-phospho-D-ribosyl)imidazole-4-carboxamide from 5-amino-1-(5-phospho-D-ribosyl)imidazole-4-carboxylate: step 1/2. This Pelagibacter ubique (strain HTCC1062) protein is Phosphoribosylaminoimidazole-succinocarboxamide synthase.